A 244-amino-acid chain; its full sequence is MAQDARRLEPAAVQVRSLVRGFGDKTVLDRLDLDIPEGQFVALLGKSGSGKSTLLRALAGLDYDVEGRGGTLTVPEEVSVAFQDSRLLPWLKVLDNVTLGLGRTGTSRGAAALAEVGLAGREKAWPSELSGGEQQRVALARALVREPRLFLADEPFGALDALTRIKMHALLQELIRRHRPTVLLVTHDVDEAIALADRVLVLDRGQIVVDEIIDIPKPRALGDSKFHEFRTTLLGALGVEVAAQ.

The ABC transporter domain maps to 13–229 (VQVRSLVRGF…ALGDSKFHEF (217 aa)). Residue 45-52 (GKSGSGKS) coordinates ATP.

The protein belongs to the ABC transporter superfamily. Aliphatic sulfonates importer (TC 3.A.1.17.2) family. In terms of assembly, the complex is composed of two ATP-binding proteins (SsuB), two transmembrane proteins (SsuC) and a solute-binding protein (SsuA).

The protein resides in the cell membrane. The catalysed reaction is ATP + H2O + aliphatic sulfonate-[sulfonate-binding protein]Side 1 = ADP + phosphate + aliphatic sulfonateSide 2 + [sulfonate-binding protein]Side 1.. Its function is as follows. Part of the ABC transporter complex SsuABC involved in aliphatic sulfonates import. Responsible for energy coupling to the transport system. The chain is Aliphatic sulfonates import ATP-binding protein SsuB 2 from Rhodococcus jostii (strain RHA1).